We begin with the raw amino-acid sequence, 83 residues long: Turripeptide Lol11.1 (83 aa).

Positions 1–27 (MARQMMTVGCLILIVVLLDMMVPVFNT) are cleaved as a signal peptide.

This sequence belongs to the conopeptide I2-like superfamily. In terms of processing, contains 4 disulfide bonds. As to expression, expressed by the venom duct.

The protein resides in the secreted. In terms of biological role, acts as a neurotoxin by inhibiting voltage-gated potassium channels (Kv). This is Turripeptide Lol11.1 from Iotyrris olangoensis (Sea snail).